The following is a 411-amino-acid chain: AT-hook motif nuclear-localized protein 14 (411 aa).

4 disordered regions span residues 1–32, 54–164, 289–348, and 366–411; these read MDPNESHHHHQQQQLHHLHQQQQQQQQQQRLT, ASTG…LGSV, KDAA…HQAG, and THSR…QIPD. The span at 7 to 19 shows a compositional bias: basic residues; sequence HHHHQQQQLHHLH. Over residues 20–29 the composition is skewed to low complexity; it reads QQQQQQQQQQ. The span at 54-66 shows a compositional bias: polar residues; it reads ASTGNAVPSSNNG. The Bipartite nuclear localization signal signature appears at 105-113; sequence KRKRGRPRK. Positions 105–117 form a DNA-binding region, a.T hook; the sequence is KRKRGRPRKYVTP. Low complexity-rich tracts occupy residues 120–135 and 144–159; these read ALAAKKLASSASSSSA and VTGGTVSTNSGSSKKS. Residues 165–305 form the PPC domain; that stretch reads GKTGQCFTPH…GKGDASNSGS (141 aa). Residues 306 to 315 are compositionally biased toward polar residues; it reads RLTSPVSSGQ. Over residues 374–390 the composition is skewed to gly residues; sequence RGGGNSGHDGRGGGGYD.

It is found in the nucleus. Functionally, transcription factor that specifically binds AT-rich DNA sequences related to the nuclear matrix attachment regions (MARs). The protein is AT-hook motif nuclear-localized protein 14 of Arabidopsis thaliana (Mouse-ear cress).